The following is a 144-amino-acid chain: Large ribosomal subunit protein uL14 (144 aa).

The protein belongs to the universal ribosomal protein uL14 family. Part of the 50S ribosomal subunit. Forms a cluster with proteins L3 and L24e, part of which may contact the 16S rRNA in 2 intersubunit bridges.

Binds to 23S rRNA. Forms part of two intersubunit bridges in the 70S ribosome. In Cenarchaeum symbiosum (strain A), this protein is Large ribosomal subunit protein uL14.